The primary structure comprises 104 residues: Large ribosomal subunit protein uL24 (104 aa).

Belongs to the universal ribosomal protein uL24 family. In terms of assembly, part of the 50S ribosomal subunit.

In terms of biological role, one of two assembly initiator proteins, it binds directly to the 5'-end of the 23S rRNA, where it nucleates assembly of the 50S subunit. Functionally, one of the proteins that surrounds the polypeptide exit tunnel on the outside of the subunit. The chain is Large ribosomal subunit protein uL24 from Corynebacterium jeikeium (strain K411).